The following is a 194-amino-acid chain: Putative 3-methyladenine DNA glycosylase (194 aa).

It belongs to the DNA glycosylase MPG family.

This chain is Putative 3-methyladenine DNA glycosylase, found in Myxococcus xanthus (strain DK1622).